The primary structure comprises 194 residues: MEDKLKKAKIIFVVGGPGSGKGTQCEKIVQKYGYTHLSTGDLLRAEVSSGSSRGKMLSSIMEKGELVPLETVLDMLRDAMLAKVDSSNGFLIDGYPREVKQGEEFERKIAQPTLLLYVDAGPETMTQRLLKRGETSGRVDDNEETIKKRLETYYKATEPVISFYDKRGIVRKVNAEGSVDTVFSQVCTYLDSLK.

Methionine 1 carries the post-translational modification N-acetylmethionine. Residue 18 to 23 (GSGKGT) coordinates ATP. Serine 38 carries the post-translational modification Phosphoserine. Residues 38 to 67 (STGDLLRAEVSSGSSRGKMLSSIMEKGELV) are NMP. AMP contacts are provided by residues threonine 39, arginine 44, 65 to 67 (ELV), 94 to 97 (GYPR), and glutamine 101. Residues 131–141 (KRGETSGRVDD) form an LID region. Arginine 132 contributes to the ATP binding site. Positions 138 and 149 each coordinate AMP. Glycine 177 lines the ATP pocket.

It belongs to the adenylate kinase family. AK1 subfamily. In terms of assembly, monomer. It depends on Mg(2+) as a cofactor.

It is found in the cytoplasm. The catalysed reaction is a ribonucleoside 5'-phosphate + ATP = a ribonucleoside 5'-diphosphate + ADP. It carries out the reaction AMP + ATP = 2 ADP. The enzyme catalyses dAMP + ATP = dADP + ADP. It catalyses the reaction dATP + AMP = dADP + ADP. The catalysed reaction is dAMP + dATP = 2 dADP. It carries out the reaction a 2'-deoxyribonucleoside 5'-diphosphate + ATP = a 2'-deoxyribonucleoside 5'-triphosphate + ADP. The enzyme catalyses a ribonucleoside 5'-diphosphate + ATP = a ribonucleoside 5'-triphosphate + ADP. It catalyses the reaction CDP + GTP = CTP + GDP. The catalysed reaction is GDP + ATP = GTP + ADP. It carries out the reaction UDP + ATP = UTP + ADP. The enzyme catalyses GTP + UDP = UTP + GDP. It catalyses the reaction dTDP + GTP = dTTP + GDP. The catalysed reaction is dCDP + GTP = dCTP + GDP. It carries out the reaction dGDP + ATP = dGTP + ADP. The enzyme catalyses dADP + GTP = dATP + GDP. It catalyses the reaction thiamine diphosphate + ADP = thiamine triphosphate + AMP. Functionally, catalyzes the reversible transfer of the terminal phosphate group between ATP and AMP. Also displays broad nucleoside diphosphate kinase activity. Plays an important role in cellular energy homeostasis and in adenine nucleotide metabolism. Also catalyzes at a very low rate the synthesis of thiamine triphosphate (ThTP) from thiamine diphosphate (ThDP) and ADP. The polypeptide is Adenylate kinase isoenzyme 1 (Ak1) (Rattus norvegicus (Rat)).